Consider the following 209-residue polypeptide: Large ribosomal subunit protein uL3 (209 aa).

The interval 127–151 is disordered; it reads SGGPSSHGSKFHRHLGGTGQATTPA.

It belongs to the universal ribosomal protein uL3 family. Part of the 50S ribosomal subunit. Forms a cluster with proteins L14 and L19.

In terms of biological role, one of the primary rRNA binding proteins, it binds directly near the 3'-end of the 23S rRNA, where it nucleates assembly of the 50S subunit. The protein is Large ribosomal subunit protein uL3 of Borrelia turicatae (strain 91E135).